Here is a 96-residue protein sequence, read N- to C-terminus: Nucleoid-associated protein TC_0612 (96 aa).

This sequence belongs to the YbaB/EbfC family. In terms of assembly, homodimer.

It is found in the cytoplasm. It localises to the nucleoid. Functionally, binds to DNA and alters its conformation. May be involved in regulation of gene expression, nucleoid organization and DNA protection. This chain is Nucleoid-associated protein TC_0612, found in Chlamydia muridarum (strain MoPn / Nigg).